Reading from the N-terminus, the 186-residue chain is Intraflagellar transport protein 27 homolog (186 aa).

GTP is bound by residues 12-19 (GDPAVGKT), 64-68 (DSAGK), and 123-126 (TKTD).

This sequence belongs to the small GTPase superfamily. Rab family. As to quaternary structure, component of the IFT complex B, at least composed of IFT20, IFT22, IFT25, IFT27, IFT46, IFT52, TRAF3IP1/IFT54, IFT57, IFT74, IFT80, IFT81, and IFT88. Interacts with IFT25. Interacts with IFT70B. Interacts with RABL2/RABL2A; binding is equal in the presence of GTP or GDP. Interacts with IFT88. Interacts with ARL6; recognizes and binds with the GTP-free form of ARL6. As to expression, expressed predominantly in the testis (at protein level). Co-localizes with RABL2/RABL2A in the midpiece of elongated spermatids within the testis (at protein level).

Its subcellular location is the cell projection. It is found in the cilium. It localises to the cytoplasm. The protein resides in the flagellum. Functionally, small GTPase-like component of the intraflagellar transport (IFT) complex B that promotes the exit of the BBSome complex from cilia via its interaction with ARL6. Not involved in entry of the BBSome complex into cilium. Prevents aggregation of GTP-free ARL6. Required for hedgehog signaling. Forms a subcomplex within the IFT complex B with IFT25. Its role in intraflagellar transport is mainly seen in tissues rich in ciliated cells such as kidney and testis. Essential for male fertility, spermiogenesis and sperm flagella formation. Plays a role in the early development of the kidney. May be involved in the regulation of ureteric bud initiation. In Mus musculus (Mouse), this protein is Intraflagellar transport protein 27 homolog (Ift27).